The chain runs to 341 residues: Ras association domain-containing protein 6 (341 aa).

Phosphoserine is present on S155. One can recognise a Ras-associating domain in the interval 190–278; sequence YDHETSIFTP…ARIFLMDKDA (89 aa). Residues 285–332 form the SARAH domain; it reads VAPYINFHFSFLKSILQRLDEEEKMEIERIMAKFNTERAFILKCLQSK.

As to quaternary structure, interacts with MOAP1. Interaction with activated KRAS is still a matter of debate.

Functionally, involved in the induction of apoptosis. May act as a Ras effector protein. May suppress the serum-induced basal levels of NF-kappa-B. The chain is Ras association domain-containing protein 6 (Rassf6) from Rattus norvegicus (Rat).